Consider the following 29-residue polypeptide: Cyclotide vibi-B (29 aa).

The segment at residues 1 to 29 (GLPVCGETCFGGTCNTPGCTCSYPICTRN) is a cross-link (cyclopeptide (Gly-Asn)). Intrachain disulfides connect Cys-5-Cys-19, Cys-9-Cys-21, and Cys-14-Cys-26.

Post-translationally, this is a cyclic peptide.

In terms of biological role, probably participates in a plant defense mechanism. This Viola biflora (Yellow wood violet) protein is Cyclotide vibi-B.